A 127-amino-acid polypeptide reads, in one-letter code: Small ribosomal subunit protein eS8 (127 aa).

The protein belongs to the eukaryotic ribosomal protein eS8 family. In terms of assembly, part of the 30S ribosomal subunit.

In Pyrococcus furiosus (strain ATCC 43587 / DSM 3638 / JCM 8422 / Vc1), this protein is Small ribosomal subunit protein eS8.